A 766-amino-acid polypeptide reads, in one-letter code: Pyrophosphate-energized vacuolar membrane proton pump (766 aa).

At 2–8 (GAAILPD) the chain is on the intravacuolar side. A helical transmembrane segment spans residues 9–35 (LGTEILIPVCAVIGIAFALFQWLLVSK). Topologically, residues 36–84 (VKLSAVRDASPNAAAKNGYNDYLIEEEEGINDHNVVVKCAEIQNAISEG) are cytoplasmic. A helical membrane pass occupies residues 85–114 (ATSFLFTEYKYVGIFMVAFAILIFLFLGSV). Residues 115–135 (EGFSTSPQACSYDKTKTCKPA) are Intravacuolar-facing. Cysteine 124 and cysteine 132 are joined by a disulfide. A helical transmembrane segment spans residues 136-163 (LATAIFSTVSFLLGGVTSLVSGFLGMKI). Topologically, residues 164 to 186 (ATYANARTTLEARKGVGKAFITA) are cytoplasmic. A helical membrane pass occupies residues 187-216 (FRSGAVMGFLLAANGLLVLYIAINLFKIYY). Over 217–219 (GDD) the chain is Intravacuolar. The helical transmembrane segment at 220–248 (WGGLFEAITGYGLGGSSMALFGRVGGGIY) threads the bilayer. At 249–286 (TKAADVGADLVGKVERNIPEDDPRNPAVIADNVGDNVG) the chain is on the cytoplasmic side. Lysine 250 is a substrate binding site. Mg(2+)-binding residues include aspartate 253, aspartate 257, and aspartate 283. Residues 287-312 (DIAGMGSDLFGSYAESSCAALVVASI) form a helical membrane-spanning segment. Topologically, residues 313–320 (SSFGLNHE) are intravacuolar. The chain crosses the membrane as a helical span at residues 321 to 346 (LTAMLYPLIVSSVGILVCLLTTLFAT). The Cytoplasmic portion of the chain corresponds to 347-354 (DFFEIKAV). A helical transmembrane segment spans residues 355 to 382 (KEIEPALKKQLVISTVLMTIGVAVVSFV). Residues 383–401 (ALPTSFTIFNFGVQKDVKS) lie on the Intravacuolar side of the membrane. A helical transmembrane segment spans residues 402-425 (WQLFLCVAVGLWAGLIIGFVTEYY). At 426–447 (TSNAYSPVQDVADSCRTGAATN) the chain is on the cytoplasmic side. A helical transmembrane segment spans residues 448-472 (VIFGLALGYKSVIIPIFAIAISIFV). The Intravacuolar portion of the chain corresponds to 473–478 (SFTFAA). Residues 479-505 (MYGIAVAALGMLSTIATGLAIDAYGPI) traverse the membrane as a helical segment. At 506 to 534 (SDNAGGIAEMAGMSHRIRERTDALDAAGN) the chain is on the cytoplasmic side. Residues aspartate 507 and asparagine 534 each contribute to the Mg(2+) site. Residues 535–563 (TTAAIGKGFAIGSAALVSLALFGAFVSRA) traverse the membrane as a helical segment. At 564-573 (SITTVDVLTP) the chain is on the intravacuolar side. Residues 574–602 (KVFIGLIVGAMLPYWFSAMTMKSVGSAAL) traverse the membrane as a helical segment. Residues 603-631 (KMVEEVRRQFNTIPGLMEGTAKPDYATCV) lie on the Cytoplasmic side of the membrane. The helical transmembrane segment at 632-660 (KISTDASIKEMIPPGALVMLTPLVVGILF) threads the bilayer. A topological domain (intravacuolar) is located at residue glycine 661. A helical transmembrane segment spans residues 662–689 (VETLSGVLAGSLVSGVQIAISASNTGGA). Residues 690–732 (WDNAKKYIEAGASEHARSLGPKGSDCHKAAVIGDTIGDPLKDT) are Cytoplasmic-facing. Aspartate 691 and aspartate 727 together coordinate Mg(2+). Lysine 730 is a binding site for substrate. The helical transmembrane segment at 733-758 (SGPSLNILIKLMAVESLVFAPFFATH) threads the bilayer. The Intravacuolar segment spans residues 759–765 (GGLLFKI).

This sequence belongs to the H(+)-translocating pyrophosphatase (TC 3.A.10) family. K(+)-stimulated subfamily. Homodimer.

It is found in the vacuole membrane. It carries out the reaction diphosphate + H2O + H(+)(in) = 2 phosphate + 2 H(+)(out). Its activity is regulated as follows. Inhibited by excess pyrophosphate as well as excess Mg(2+). Inhibition by ATP, GTP, and CTP is reversed by increasing the Mg(2+) concentration. This suggests that the substrate is a particular metal complex such as MgPPi(2-). Modification of Asp-283 with DCCD abolishes pyrophosphatase activity. In terms of biological role, proton-translocating inorganic pyrophosphatase that contributes to the transtonoplast (from cytosol to vacuole lumen) H(+)-electrochemical potential difference. It establishes a proton gradient of similar and often greater magnitude than the H(+)-ATPase on the same membrane. The sequence is that of Pyrophosphate-energized vacuolar membrane proton pump from Vigna radiata var. radiata (Mung bean).